The primary structure comprises 90 residues: MKVEVIFLASCVLFSLIHAHLSHEEPMKEPEYCRWTNAFNGTCSDRGNPQTMCFFDFLDAHTARVMPKNCACNDLPGNKRYCECSFVCNS.

The signal sequence occupies residues 1–19 (MKVEVIFLASCVLFSLIHA). Intrachain disulfides connect Cys-33/Cys-88, Cys-43/Cys-72, Cys-53/Cys-82, and Cys-70/Cys-84.

Belongs to the DEFL family.

It localises to the secreted. This is Putative defensin-like protein 243 (SCRL9) from Arabidopsis thaliana (Mouse-ear cress).